We begin with the raw amino-acid sequence, 262 residues long: Beta-phosphoglucomutase (262 aa).

Asp-29 serves as the catalytic Nucleophile. Mg(2+)-binding residues include Asp-29 and Asp-31. Asp-29 is modified (4-aspartylphosphate). Asp-31 functions as the Proton donor/acceptor in the catalytic mechanism. Residues Asp-31, Gly-79, Arg-82, Ser-157, and Asn-159 each coordinate beta-D-glucose 6-phosphate. A Mg(2+)-binding site is contributed by Asp-215.

Belongs to the HAD-like hydrolase superfamily. CbbY/CbbZ/Gph/YieH family. As to quaternary structure, monomer. Mg(2+) serves as cofactor. Post-translationally, autophosphorylated.

The catalysed reaction is beta-D-glucose 1-phosphate = beta-D-glucose 6-phosphate. Its function is as follows. Catalyzes the interconversion of D-glucose 1-phosphate (G1P) and D-glucose 6-phosphate (G6P), forming beta-D-glucose 1,6-(bis)phosphate (beta-G16P) as an intermediate. The polypeptide is Beta-phosphoglucomutase (Mycobacterium bovis (strain ATCC BAA-935 / AF2122/97)).